The chain runs to 692 residues: Transcription factor steA (692 aa).

The DNA-binding element occupies 56–165 (DQLIRRFLLP…SVPHDRLFLD (110 aa)). Disordered stretches follow at residues 406–507 (SPTY…EQSS) and 519–540 (LPAN…SDRY). Positions 470–482 (RSVNSTYTATLPQ) are enriched in polar residues. 2 C2H2-type zinc fingers span residues 564–588 (HSCP…VRTH) and 594–616 (YPCP…RRIH). The tract at residues 618–665 (AQQDGQPLVHEDDLENDDNESVSHDEDESPSESVHPAVPGVHGMTSMP) is disordered. Positions 629-647 (DDLENDDNESVSHDEDESP) are enriched in acidic residues.

Belongs to the STE12 transcription factor family.

It is found in the nucleus. Functionally, transcription factor involved in sexual reproduction. Required for cleistothecial development and ascosporogenesis. Not required for asexual reproduction (conidiation). May act to repress medA expression. In Emericella nidulans (strain FGSC A4 / ATCC 38163 / CBS 112.46 / NRRL 194 / M139) (Aspergillus nidulans), this protein is Transcription factor steA (steA).